We begin with the raw amino-acid sequence, 75 residues long: Small ribosomal subunit protein eS28 (75 aa).

Belongs to the eukaryotic ribosomal protein eS28 family.

In Methanococcus aeolicus (strain ATCC BAA-1280 / DSM 17508 / OCM 812 / Nankai-3), this protein is Small ribosomal subunit protein eS28.